Consider the following 301-residue polypeptide: UDP-N-acetylenolpyruvoylglucosamine reductase 1 (301 aa).

An FAD-binding PCMH-type domain is found at 29–196; it reads KIGGPADILI…LEAEFQLQIG (168 aa). Residue arginine 174 is part of the active site. The Proton donor role is filled by serine 225. Residue glutamate 295 is part of the active site.

The protein belongs to the MurB family. Requires FAD as cofactor.

It localises to the cytoplasm. It carries out the reaction UDP-N-acetyl-alpha-D-muramate + NADP(+) = UDP-N-acetyl-3-O-(1-carboxyvinyl)-alpha-D-glucosamine + NADPH + H(+). Its pathway is cell wall biogenesis; peptidoglycan biosynthesis. In terms of biological role, cell wall formation. This is UDP-N-acetylenolpyruvoylglucosamine reductase 1 from Bacillus thuringiensis subsp. konkukian (strain 97-27).